Consider the following 608-residue polypeptide: uncharacterized protein (608 aa).

The disordered stretch occupies residues 1-21 (MHTNSPLRADNQDLETQPLLR). Position 24 is a phosphothreonine (T24). A Phosphoserine modification is found at S27. Residues 55–75 (IIYLLGIVLLSFFGVSIVQYI) form a helical membrane-spanning segment. N115, N141, N169, N407, N425, N449, N453, N527, and N580 each carry an N-linked (GlcNAc...) asparagine glycan.

The protein localises to the membrane. This is an uncharacterized protein from Saccharomyces cerevisiae (strain ATCC 204508 / S288c) (Baker's yeast).